Here is a 322-residue protein sequence, read N- to C-terminus: Sulfate adenylyltransferase subunit 2 (322 aa).

The protein belongs to the PAPS reductase family. CysD subfamily. As to quaternary structure, heterodimer composed of CysD, the smaller subunit, and CysN.

It carries out the reaction sulfate + ATP + H(+) = adenosine 5'-phosphosulfate + diphosphate. It participates in sulfur metabolism; hydrogen sulfide biosynthesis; sulfite from sulfate: step 1/3. In terms of biological role, with CysN forms the ATP sulfurylase (ATPS) that catalyzes the adenylation of sulfate producing adenosine 5'-phosphosulfate (APS) and diphosphate, the first enzymatic step in sulfur assimilation pathway. APS synthesis involves the formation of a high-energy phosphoric-sulfuric acid anhydride bond driven by GTP hydrolysis by CysN coupled to ATP hydrolysis by CysD. The protein is Sulfate adenylyltransferase subunit 2 of Bradyrhizobium sp. (strain BTAi1 / ATCC BAA-1182).